A 1506-amino-acid chain; its full sequence is Condensin-2 complex subunit D3 (1506 aa).

The interval 154 to 194 is disordered; the sequence is SNLTQKRKKDHSKSSKDNYRKSRKRGKPPRKEDYQVDELSR. HEAT repeat units follow at residues 442-476, 532-567, and 574-605; these read HKFFVQEIIFDRCLDKAPTVRSKALSSFAHCLELS, PGERCFMTMLRKRIKDEKINVRKSALQVLMSILKHC, and QDLLILQDHCRDPAISVRKQALQSLTELVMAQ. S562 carries the post-translational modification Phosphoserine. Residues 884–897 show a composition bias toward polar residues; it reads SDHLPSSQGTTDAL. The disordered stretch occupies residues 884 to 908; the sequence is SDHLPSSQGTTDALDSQPPFQPRSS. Residues 968 to 1004 form an HEAT 4 repeat; the sequence is TVMVDNYIPNISVCLKDSDPFIRKQTLVLLTNLLQEE. Residues 1213 to 1270 adopt a coiled-coil conformation; sequence ALRELMNYLREVMQDYRDEINDFFAVDKQLASELEYDMKKYNEQLAQEQALTEHANAT. Residues 1317–1353 are disordered; the sequence is QDNADVPPTQSRPSAPRSNFTPTLPPISENGPLKIMS. Over residues 1324–1338 the composition is skewed to polar residues; that stretch reads PTQSRPSAPRSNFTP. 4 positions are modified to phosphoserine: S1359, S1368, S1381, and S1393. 2 disordered regions span residues 1385–1412 and 1473–1506; these read LPFNVETGSPENPSSHESSLSLEKESDR and PQSPQWNVKSPARSHGSTRSSRRSLRKAPLKTAN. Low complexity predominate over residues 1393–1405; it reads SPENPSSHESSLS. Residues 1492–1506 show a composition bias toward basic residues; sequence SSRRSLRKAPLKTAN.

As to quaternary structure, component of the condensin-2 complex, which contains the SMC2 and SMC4 heterodimer, and 3 non SMC subunits that probably regulate the complex: NCAPH2, NCAPD3 and NCAPG2.

It localises to the nucleus. In terms of biological role, regulatory subunit of the condensin-2 complex, a complex which establishes mitotic chromosome architecture and is involved in physical rigidity of the chromatid axis. May promote the resolution of double-strand DNA catenanes (intertwines) between sister chromatids. Condensin-mediated compaction likely increases tension in catenated sister chromatids, providing directionality for type II topoisomerase-mediated strand exchanges toward chromatid decatenation. Specifically required for decatenation of centromeric ultrafine DNA bridges during anaphase. Early in neurogenesis, may play an essential role to ensure accurate mitotic chromosome condensation in neuron stem cells, ultimately affecting neuron pool and cortex size. This Mus musculus (Mouse) protein is Condensin-2 complex subunit D3 (Ncapd3).